Reading from the N-terminus, the 564-residue chain is Malignant brain tumor repeat protein 1 (564 aa).

4 MBT repeats span residues 64 to 176, 205 to 327, 331 to 442, and 450 to 549; these read FTWS…MKWL, RPTE…TKAT, LEHS…LDRL, and FKWE…LRHP.

In terms of assembly, interacts with histone H3 that is trimethylated at 'Lys-9' (H3K9me3).

This is Malignant brain tumor repeat protein 1 (mbtr-1) from Caenorhabditis elegans.